A 161-amino-acid chain; its full sequence is Chorion class B protein L12 (161 aa).

A signal peptide spans 1–21 (MAAKLILFVCATALVAQSVLS). Residues 22-52 (IGCGCGGRGYGGLGYGGLGYGGLGGGCGRGF) form a left arm region. 3 tandem repeats follow at residues 30 to 34 (GYGGL), 35 to 39 (GYGGL), and 40 to 44 (GYGGL). Positions 30 to 44 (GYGGLGYGGLGYGGL) are 3 X 5 AA tandem repeats of G-Y-G-G-L. The tract at residues 53 to 121 (SGGGLPVATA…GNGAVGITRE (69 aa)) is central domain. A right arm (Gly-rich tandem repeats) region spans residues 122–161 (GGFGYGAGYGDGYGLGFGGYGGGYGLGNGGYGGCGCGWGY).

The protein belongs to the chorion protein family.

Functionally, this protein is one of many from the eggshell of the silk moth. The polypeptide is Chorion class B protein L12 (Bombyx mori (Silk moth)).